The following is a 456-amino-acid chain: Elongator complex protein 4 (456 aa).

The span at 1–11 (MSFRKRGEILN) shows a compositional bias: basic and acidic residues. A disordered region spans residues 1–91 (MSFRKRGEIL…SQPTTSTGSA (91 aa)). Omega-N-methylarginine is present on arginine 13. Positions 18-27 (RGPLLRGPPR) are enriched in low complexity. Residues 57 to 66 (NIADESKTKM) are compositionally biased toward basic and acidic residues. A compositionally biased stretch (low complexity) spans 77 to 90 (PSPATSQPTTSTGS). Serine 222 is subject to Phosphoserine. The interval 424–444 (EGSAASEQSHSHSHSDEISHN) is disordered. Residues 432 to 442 (SHSHSHSDEIS) are compositionally biased toward basic and acidic residues.

The protein belongs to the ELP4 family. As to quaternary structure, component of the elongator complex which consists of ELP1/IKI3, ELP2, ELP3, ELP4, ELP5/IKI1 and ELP6. The elongator complex is composed of two copies of the Elp123 subcomplex (composed of ELP1/IKI3, ELP2 and ELP3) and two copies of the Elp456 subcomplex (composed of ELP4, ELP5/IKI1 and ELP6). The Elp123 subcomplex forms a two-lobed scaffold, which binds the Elp456 subcomplex asymmetrically. In each lobe, ELP2 is tightly sandwiched between ELP1/IKI3 and ELP3. The Elp123 subcomplex binds tRNA through ELP1/IKI3 and ELP3 and can bind 2 tRNAs simultaneously. tRNA-binding by the Elp123 subcomplex induces conformational rearrangements which precisely position the targeted anticodon base in the active site. The Elp456 subcomplex binds tRNA and has ATPase activity. ELP4 interacts with KTI12.

The protein localises to the cytoplasm. It is found in the nucleus. Its pathway is tRNA modification; 5-methoxycarbonylmethyl-2-thiouridine-tRNA biosynthesis. Functionally, component of the elongator complex, a multiprotein complex which is required for multiple tRNA modifications, including mcm5U (5-methoxycarbonylmethyl uridine), mcm5s2U (5-methoxycarbonylmethyl-2-thiouridine), and ncm5U (5-carbamoylmethyl uridine). The elongator complex catalyzes formation of carboxymethyluridine in the wobble base at position 34 in tRNAs. It functions as a gamma-toxin target (TOT); disruption of the complex confers resistance to Kluyveromyces lactis toxin zymocin (pGKL1 killer toxin). May also be involved in sensitivity to Pichia inositovora toxin. The polypeptide is Elongator complex protein 4 (Saccharomyces cerevisiae (strain ATCC 204508 / S288c) (Baker's yeast)).